The chain runs to 533 residues: MAASKVEIAPFEVTPLDAIPAVCSTARATFASHKTKNLQWRLVQLRKLYWALDDFKASLMAALQQDLRKGGYESDFTEVDWVKNDCLHMINNLETFAKTEKLKDLPVTYSMMNFRVKKEPLGTVLIIGPYNFPIQLVLAPLVGAIGAGCTAVIKPSELTPACAMAMKEMIESRLDRDAFAVVNGGVPETNALMEEKWDKIMFTGSAQVGSIIARKAAETLTPVCLELGGRNPAFVTKKANLALAARRLMWGKVLNAGQVCMSHNYVLVDKDVADTFIEFLKIAYKDMFPNGAKASPDLSRIVNARHFNRIKKMLDETKGKIVMGGEMDESELYIEPTAVLVDSLDDPMMQEESFGPIFSIYPVDTLDQALSIANNVHRTPLALMAFGDKSETNRILDEMTSGGACINDSYFHGAVHTVPFGGVGDSGWGAYRGKASFDNFTHFRTVSETPTWMDRFLRVRYMPYDWSELRLLQRWTNKKPNFDRQGTVAKGSEYWMWYFLGLGTKGGVKGALMRWLVVVAGYYLSAYMKARRA.

Catalysis depends on residues glutamate 226 and cysteine 260.

Belongs to the aldehyde dehydrogenase family.

It carries out the reaction 4'-apo-beta-carotenal + NAD(+) + H2O = neurosporaxanthin + NADH + 2 H(+). Its function is as follows. Beta-apo-4'-carotenal oxygenase involved in the last step of synthesis of neurosporaxanthin, a carboxylic apocarotenoid acting as an essential protective pigment and leading to orange pigmentation. Converts the aldehyde beta-apo-4'-carotenal into neurosporaxanthin. Neurosporaxanthin is synthesized from geranyl-geranyl pyrophosphate (GGPP) through several enzymatic activities. Phytoene synthase activity performed by the bifunctional enzyme al-2 first produces phytoene from geranyl-geranyl pyrophosphate (GGPP). The phytoene dehydrogenase al-1 then introduces 5 desaturations to lead to 3,4-didehydrolycopene via the intermediates phytofluene, zeta-carotene, neurosporene and lycopene. Al-2 cyclase activity then converts 3,4-didehydrolycopene into torulene. Al-2 can also convet lycopene into gamma-carotene which in turn is converted to beta-carotene by an additional al-2 cyclization reaction. Torulene is the substrate of the dioxidase cao-2 that breaks the molecule, removing five carbon atoms to yield beta-apo-4'-carotenal, whereas the aldehyde dehydrogenase ylo-1 mediates the last step by converting beta-apo-4'-carotenal into neurosporaxanthin. The chain is Beta-apo-4'-carotenal oxygenase from Neurospora crassa (strain ATCC 24698 / 74-OR23-1A / CBS 708.71 / DSM 1257 / FGSC 987).